Reading from the N-terminus, the 649-residue chain is V-type ATP synthase subunit I (649 aa).

The next 7 membrane-spanning stretches (helical) occupy residues 312-332 (FLSFFVFFSMIINDAGYGLIF), 360-380 (FMILGGGCVCWGGATTSFFGV), 455-475 (DNILMEIALLVGVVHLSLGML), 485-505 (IGWVVFMCGAYMYLPIYLQAV), 520-540 (GQVGYYVTFIGLGIAVLGGII), 556-576 (VFSDVLSYLRLYALSLAGAMV), and 593-613 (VLIIIFGHTVNIALSIMGGVI).

It belongs to the V-ATPase 116 kDa subunit family.

The protein localises to the cell membrane. Functionally, produces ATP from ADP in the presence of a proton gradient across the membrane. The protein is V-type ATP synthase subunit I (atpI) of Chlamydia muridarum (strain MoPn / Nigg).